Here is a 303-residue protein sequence, read N- to C-terminus: uncharacterized protein (303 aa).

Helical transmembrane passes span 12-32 (GLPI…SGIL), 81-101 (ISSV…VLEF), 117-137 (ALAG…FDVI), 174-194 (CIAM…TCMS), 208-228 (IISG…LDVV), and 265-286 (FFKG…SWAA). 3 Solcar repeats span residues 17 to 105 (SPMY…FKSK), 111 to 195 (DRPL…CMSF), and 206 to 293 (SHII…GKEI).

The protein belongs to the mitochondrial carrier (TC 2.A.29) family.

The protein localises to the mitochondrion inner membrane. This is an uncharacterized protein from Schizosaccharomyces pombe (strain 972 / ATCC 24843) (Fission yeast).